A 227-amino-acid polypeptide reads, in one-letter code: Deoxyribose-phosphate aldolase (227 aa).

Catalysis depends on D96, which acts as the Proton donor/acceptor. The active-site Schiff-base intermediate with acetaldehyde is the K158. Residue K187 is the Proton donor/acceptor of the active site.

It belongs to the DeoC/FbaB aldolase family. DeoC type 1 subfamily.

Its subcellular location is the cytoplasm. The catalysed reaction is 2-deoxy-D-ribose 5-phosphate = D-glyceraldehyde 3-phosphate + acetaldehyde. The protein operates within carbohydrate degradation; 2-deoxy-D-ribose 1-phosphate degradation; D-glyceraldehyde 3-phosphate and acetaldehyde from 2-deoxy-alpha-D-ribose 1-phosphate: step 2/2. In terms of biological role, catalyzes a reversible aldol reaction between acetaldehyde and D-glyceraldehyde 3-phosphate to generate 2-deoxy-D-ribose 5-phosphate. This is Deoxyribose-phosphate aldolase from Desulfotalea psychrophila (strain LSv54 / DSM 12343).